A 296-amino-acid chain; its full sequence is Copper resistance protein B (296 aa).

The first 23 residues, 1–23 (MKRNLKAIPVLVAGLFTSQLSIA), serve as a signal peptide directing secretion.

The protein localises to the cell outer membrane. Functionally, required for the copper-inducible expression of copper resistance. This Escherichia coli protein is Copper resistance protein B (pcoB).